The sequence spans 87 residues: Small ribosomal subunit protein eS21B (87 aa).

The residue at position 1 (Met-1) is an N-acetylmethionine.

The protein belongs to the eukaryotic ribosomal protein eS21 family. Component of the small ribosomal subunit (SSU). Mature yeast ribosomes consist of a small (40S) and a large (60S) subunit. The 40S small subunit contains 1 molecule of ribosomal RNA (18S rRNA) and 33 different proteins (encoded by 57 genes). The large 60S subunit contains 3 rRNA molecules (25S, 5.8S and 5S rRNA) and 46 different proteins (encoded by 81 genes). N-terminally acetylated by acetyltransferase NatB.

It is found in the cytoplasm. Its function is as follows. Component of the ribosome, a large ribonucleoprotein complex responsible for the synthesis of proteins in the cell. The small ribosomal subunit (SSU) binds messenger RNAs (mRNAs) and translates the encoded message by selecting cognate aminoacyl-transfer RNA (tRNA) molecules. The large subunit (LSU) contains the ribosomal catalytic site termed the peptidyl transferase center (PTC), which catalyzes the formation of peptide bonds, thereby polymerizing the amino acids delivered by tRNAs into a polypeptide chain. The nascent polypeptides leave the ribosome through a tunnel in the LSU and interact with protein factors that function in enzymatic processing, targeting, and the membrane insertion of nascent chains at the exit of the ribosomal tunnel. eS21 is required for the processing of the 20S rRNA-precursor to mature 18S rRNA in a late step of the maturation of 40S ribosomal subunits. Has a physiological role leading to 18S rRNA stability. This chain is Small ribosomal subunit protein eS21B, found in Saccharomyces cerevisiae (strain ATCC 204508 / S288c) (Baker's yeast).